Consider the following 532-residue polypeptide: Membrane protein insertase YidC (532 aa).

The next 5 membrane-spanning stretches (helical) occupy residues 7-27 (FFIF…QSQM), 336-356 (LTIL…ITFI), 413-433 (GGFL…YMLI), 450-470 (LSSQ…MFFI), and 492-512 (PVIF…YYII).

This sequence belongs to the OXA1/ALB3/YidC family. Type 1 subfamily. In terms of assembly, interacts with the Sec translocase complex via SecD. Specifically interacts with transmembrane segments of nascent integral membrane proteins during membrane integration.

It localises to the cell membrane. Its function is as follows. Required for the insertion and/or proper folding and/or complex formation of integral membrane proteins into the membrane. Involved in integration of membrane proteins that insert both dependently and independently of the Sec translocase complex, as well as at least some lipoproteins. Aids folding of multispanning membrane proteins. The sequence is that of Membrane protein insertase YidC from Buchnera aphidicola subsp. Acyrthosiphon pisum (strain APS) (Acyrthosiphon pisum symbiotic bacterium).